The chain runs to 243 residues: High affinity immunoglobulin epsilon receptor subunit beta (243 aa).

Residues M1 to Q48 are disordered. Residues M1 to E59 lie on the Cytoplasmic side of the membrane. The chain crosses the membrane as a helical span at residues F60 to V79. Residues C80–R97 lie on the Extracellular side of the membrane. The chain crosses the membrane as a helical span at residues A98 to M117. Residues S118 to S130 are Cytoplasmic-facing. The chain crosses the membrane as a helical span at residues L131 to L150. The Extracellular segment spans residues N151–E179. The chain crosses the membrane as a helical span at residues L180–I199. The Cytoplasmic portion of the chain corresponds to I200–S243. Phosphotyrosine is present on residues Y218 and Y224. At S225 the chain carries Phosphoserine. At Y228 the chain carries Phosphotyrosine.

This sequence belongs to the MS4A family. As to quaternary structure, tetramer of an alpha chain, a beta chain, and two disulfide linked gamma chains. Binds LILRB1. Interacts with FES/FPS and LYN. Interacts with FGR. In terms of processing, phosphorylated on tyrosine residues by LYN.

The protein resides in the membrane. Functionally, high affinity receptor that binds to the Fc region of immunoglobulins epsilon. Aggregation of FCER1 by multivalent antigens is required for the full mast cell response, including the release of preformed mediators (such as histamine) by degranulation and de novo production of lipid mediators and cytokines. Also mediates the secretion of important lymphokines. Binding of allergen to receptor-bound IgE leads to cell activation and the release of mediators responsible for the manifestations of allergy. This chain is High affinity immunoglobulin epsilon receptor subunit beta (Ms4a2), found in Rattus norvegicus (Rat).